The following is a 246-amino-acid chain: uncharacterized protein (246 aa).

Positions 1-24 are cleaved as a signal peptide; it reads MGAPLRHCLLVAAALSLGCGVAAA. 2 helical membrane-spanning segments follow: residues 71-91 and 104-124; these read YYLGSISGKKVIVAMTGIGLV and FTCASSIAIAAVMFSGVAGGA.

The protein localises to the cell membrane. This is an uncharacterized protein from Mycobacterium tuberculosis (strain ATCC 25618 / H37Rv).